A 106-amino-acid polypeptide reads, in one-letter code: MIITTTPTIDGHQITEYKGLVFGEVVSGANFIRDFFASITDVIGGRSGAYESKLNSARQEALAELEKEAKRVGANALVGVSMEYQSMGGDKGMFIVVATGTAVVIR.

This sequence belongs to the UPF0145 family.

The sequence is that of UPF0145 protein APJL_0492 from Actinobacillus pleuropneumoniae serotype 3 (strain JL03).